A 47-amino-acid chain; its full sequence is MIAKMMEALDGERFDIIMEKTLKGMTRVMIWGCLPYFLYVLIRMFTN.

A helical membrane pass occupies residues 28–45 (VMIWGCLPYFLYVLIRMF).

It localises to the cell membrane. This is an uncharacterized protein from Bacillus subtilis (strain 168).